A 426-amino-acid polypeptide reads, in one-letter code: Cell cycle checkpoint control protein RAD9B (426 aa).

S359 is subject to Phosphoserine.

It belongs to the rad9 family. Interacts with HUS1, HUS1B, RAD1, RAD9A and RAD17. Expressed in testis and skeletal muscle.

This is Cell cycle checkpoint control protein RAD9B (RAD9B) from Homo sapiens (Human).